The chain runs to 776 residues: Peregrinol diphosphate synthase CPS1, chloroplastic (776 aa).

The N-terminal 17 residues, 1–17, are a transit peptide targeting the chloroplast; sequence MASTPTLNLSITTPFVR. Position 238 (Lys-238) interacts with substrate. The Mg(2+) site is built by Asp-371 and Asp-373. A DXDD motif motif is present at residues 371–374; the sequence is DIDD. Position 457 (Lys-457) interacts with substrate.

The protein belongs to the terpene synthase family. The cofactor is Mg(2+). As to expression, present in both leaves and flowers, with higher levels in leaves.

The protein localises to the plastid. It localises to the chloroplast. The catalysed reaction is peregrinol diphosphate = (2E,6E,10E)-geranylgeranyl diphosphate + H2O. The protein operates within secondary metabolite biosynthesis; terpenoid biosynthesis. Involved in the biosynthesis of labdane-type diterpenoid including marrubiin and other labdane-related furanoid diterpenoids with potential applications as anti-diabetics, analgesics or vasorelaxants. Terpene synthase that produces peregrinol diphosphate from geranylgeranyl diphosphate (GGPP). This is Peregrinol diphosphate synthase CPS1, chloroplastic from Marrubium vulgare (White horehound).